We begin with the raw amino-acid sequence, 682 residues long: Homeobox-leucine zipper protein HDG7 (682 aa).

Residues 33–65 form a disordered region; that stretch reads LSDDSFDAMSGDEDKQEQRPKKKKRKTKYHRHT. Basic residues predominate over residues 52–65; the sequence is PKKKKRKTKYHRHT. The segment at residues 57–116 is a DNA-binding region (homeobox); it reads RKTKYHRHTSYQIQELESFFKECPHPNEKQRLELGKKLTLESKQIKFWFQNRRTQMKTQL. Positions 105–186 form a coiled coil; it reads FQNRRTQMKT…LDRICALANR (82 aa). Positions 214-429 constitute an START domain; sequence SGGTSLMFMD…LQRQCESFTM (216 aa).

It belongs to the HD-ZIP homeobox family. Class IV subfamily. Interacts with AIL7/PLT7. As to expression, expressed in cells around the base of leaf primordia, in the outermost 2 to 3 cell layers along the boundary between two leaf primordia. Expressed in lateral root primordia and tips, and in the epidermal boundaries of two cotyledons at heart-stage embryo.

It localises to the nucleus. In terms of biological role, probable transcription factor that binds to the DNA sequence 5'-GCATTAAATGC-3'. Seems to promote cell differentiation. The sequence is that of Homeobox-leucine zipper protein HDG7 from Arabidopsis thaliana (Mouse-ear cress).